The following is a 490-amino-acid chain: GTPase Der (490 aa).

EngA-type G domains lie at 3-166 and 203-376; these read PVVA…VDEI and IKLA…DSST. Residues 9-16, 56-60, 118-121, 209-216, 256-260, and 321-324 contribute to the GTP site; these read GRPNVGKS, DTGGI, NKTD, DTAGV, and NKWD. A KH-like domain is found at 377–461; sequence RRQSTAMLTR…PIRIQFKEGE (85 aa).

This sequence belongs to the TRAFAC class TrmE-Era-EngA-EngB-Septin-like GTPase superfamily. EngA (Der) GTPase family. Associates with the 50S ribosomal subunit.

In terms of biological role, GTPase that plays an essential role in the late steps of ribosome biogenesis. The chain is GTPase Der from Enterobacter sp. (strain 638).